Consider the following 157-residue polypeptide: UPF0758 protein VC_0510 (157 aa).

The 122-residue stretch at 36–157 (ALTNPDATKE…CTSFAERGWL (122 aa)) folds into the MPN domain. The Zn(2+) site is built by His-107, His-109, and Asp-120. The short motif at 107 to 120 (HNHPSGDSTPSQAD) is the JAMM motif element.

Belongs to the UPF0758 family.

The chain is UPF0758 protein VC_0510 from Vibrio cholerae serotype O1 (strain ATCC 39315 / El Tor Inaba N16961).